Here is a 270-residue protein sequence, read N- to C-terminus: Formamidopyrimidine-DNA glycosylase (270 aa).

The active-site Schiff-base intermediate with DNA is Pro-2. Catalysis depends on Glu-3, which acts as the Proton donor. Lys-57 serves as the catalytic Proton donor; for beta-elimination activity. The DNA site is built by His-90, Arg-109, and Lys-151. The FPG-type zinc-finger motif lies at 236–270; sequence RVYGRKGQACEVCESEIQSVTLGQRNTFFCEQCQK. Residue Arg-260 is the Proton donor; for delta-elimination activity of the active site.

The protein belongs to the FPG family. In terms of assembly, monomer. The cofactor is Zn(2+).

The enzyme catalyses Hydrolysis of DNA containing ring-opened 7-methylguanine residues, releasing 2,6-diamino-4-hydroxy-5-(N-methyl)formamidopyrimidine.. It catalyses the reaction 2'-deoxyribonucleotide-(2'-deoxyribose 5'-phosphate)-2'-deoxyribonucleotide-DNA = a 3'-end 2'-deoxyribonucleotide-(2,3-dehydro-2,3-deoxyribose 5'-phosphate)-DNA + a 5'-end 5'-phospho-2'-deoxyribonucleoside-DNA + H(+). Functionally, involved in base excision repair of DNA damaged by oxidation or by mutagenic agents. Acts as a DNA glycosylase that recognizes and removes damaged bases. Has a preference for oxidized purines, such as 7,8-dihydro-8-oxoguanine (8-oxoG). Has AP (apurinic/apyrimidinic) lyase activity and introduces nicks in the DNA strand. Cleaves the DNA backbone by beta-delta elimination to generate a single-strand break at the site of the removed base with both 3'- and 5'-phosphates. The protein is Formamidopyrimidine-DNA glycosylase of Pseudoalteromonas atlantica (strain T6c / ATCC BAA-1087).